Here is a 412-residue protein sequence, read N- to C-terminus: Peptidase T (412 aa).

Zn(2+) is bound at residue His84. Asp86 is a catalytic residue. Position 146 (Asp146) interacts with Zn(2+). Glu179 serves as the catalytic Proton acceptor. Residues Glu180, Asp202, and His385 each coordinate Zn(2+).

It belongs to the peptidase M20B family. Requires Zn(2+) as cofactor.

It is found in the cytoplasm. It catalyses the reaction Release of the N-terminal residue from a tripeptide.. Its function is as follows. Cleaves the N-terminal amino acid of tripeptides. In Haemophilus influenzae (strain ATCC 51907 / DSM 11121 / KW20 / Rd), this protein is Peptidase T.